Consider the following 136-residue polypeptide: UPF0225 protein Mpe_A2093 (136 aa).

The protein belongs to the UPF0225 family.

In Methylibium petroleiphilum (strain ATCC BAA-1232 / LMG 22953 / PM1), this protein is UPF0225 protein Mpe_A2093.